Reading from the N-terminus, the 179-residue chain is MARLAELYNKEMVPALMKDQNYKNIMEVPKLVKIVVNMGLGEAIQNVKILDSAAEELAAITGQRPVITKAKKSIAGFKLRQGMPIGCAVTLRREKMYEFLDRLVSVSLPRVRDFKGISGKAFDGKGNYSLGVKEQLIFPEIDYDKVDKIKGLNITIVTTAKTDAEGKALLKLMGLPFRN.

This sequence belongs to the universal ribosomal protein uL5 family. Part of the 50S ribosomal subunit; part of the 5S rRNA/L5/L18/L25 subcomplex. Contacts the 5S rRNA and the P site tRNA. Forms a bridge to the 30S subunit in the 70S ribosome.

Its function is as follows. This is one of the proteins that bind and probably mediate the attachment of the 5S RNA into the large ribosomal subunit, where it forms part of the central protuberance. In the 70S ribosome it contacts protein S13 of the 30S subunit (bridge B1b), connecting the 2 subunits; this bridge is implicated in subunit movement. Contacts the P site tRNA; the 5S rRNA and some of its associated proteins might help stabilize positioning of ribosome-bound tRNAs. This is Large ribosomal subunit protein uL5 from Citrifermentans bemidjiense (strain ATCC BAA-1014 / DSM 16622 / JCM 12645 / Bem) (Geobacter bemidjiensis).